Here is a 758-residue protein sequence, read N- to C-terminus: Xaa-Pro dipeptidyl-peptidase (758 aa).

Residues S349, D469, and H499 each act as charge relay system in the active site.

Belongs to the peptidase S15 family. In terms of assembly, homodimer.

It is found in the cytoplasm. It catalyses the reaction Hydrolyzes Xaa-Pro-|- bonds to release unblocked, N-terminal dipeptides from substrates including Ala-Pro-|-p-nitroanilide and (sequentially) Tyr-Pro-|-Phe-Pro-|-Gly-Pro-|-Ile.. Removes N-terminal dipeptides sequentially from polypeptides having unsubstituted N-termini provided that the penultimate residue is proline. The protein is Xaa-Pro dipeptidyl-peptidase of Streptococcus uberis (strain ATCC BAA-854 / 0140J).